The chain runs to 329 residues: Probable carboxylesterase 8 (329 aa).

The Involved in the stabilization of the negatively charged intermediate by the formation of the oxyanion hole motif lies at 73-75 (HGG). Active-site residues include Ser161, Asp264, and His294.

Belongs to the 'GDXG' lipolytic enzyme family. Expressed in leaves, stems, flowers and siliques.

It catalyses the reaction a carboxylic ester + H2O = an alcohol + a carboxylate + H(+). Its function is as follows. Carboxylesterase acting on esters with varying acyl chain length. The sequence is that of Probable carboxylesterase 8 (CXE8) from Arabidopsis thaliana (Mouse-ear cress).